A 196-amino-acid chain; its full sequence is RNA-binding protein with multiple splicing 2 (196 aa).

The RRM domain occupies 20–97 (RTLFVSGLPI…QTLRLEFAKA (78 aa)). Residues 30 to 40 (DIKPRELYLLF) are important for homodimerization.

In terms of assembly, homodimer. In terms of tissue distribution, expressed in developing heart, pronephros, retina and epiphysis. In adult, high expression in heart, moderate in kidney, undetectable in liver, lung and skeletal muscle.

It is found in the cytoplasm. Its subcellular location is the nucleus. It localises to the stress granule. In terms of biological role, RNA-binding protein involved in the regulation of smooth muscle cell differentiation and proliferation in the gastrointestinal system. Binds NOG mRNA, the major inhibitor of the bone morphogenetic protein (BMP) pathway. Mediates an increase of NOG mRNA levels, thereby contributing to the negative regulation of BMP signaling pathway and promoting reversible dedifferentiation and proliferation of smooth muscle cells. Acts as a pre-mRNA alternative splicing regulator. Mediates ACTN1 and FLNB alternative splicing. Likely binds to mRNA tandem CAC trinucleotide or CA dinucleotide motifs. The chain is RNA-binding protein with multiple splicing 2 from Xenopus laevis (African clawed frog).